Consider the following 1067-residue polypeptide: Ubiquitin conjugation factor E4 A (1067 aa).

The interval 33-57 is disordered; sequence KEQLKQQSDELPASPDDSDNSVSES. At K386 the chain carries N6-acetyllysine. The U-box domain maps to 987–1061; the sequence is DACDEFLDPI…QRWLAERKQQ (75 aa).

This sequence belongs to the ubiquitin conjugation factor E4 family.

It is found in the cytoplasm. It catalyses the reaction S-ubiquitinyl-[E2 ubiquitin-conjugating enzyme]-L-cysteine + [acceptor protein]-L-lysine = [E2 ubiquitin-conjugating enzyme]-L-cysteine + N(6)-ubiquitinyl-[acceptor protein]-L-lysine.. Its pathway is protein modification; protein ubiquitination. Its function is as follows. Ubiquitin-protein ligase that probably functions as an E3 ligase in conjunction with specific E1 and E2 ligases. May also function as an E4 ligase mediating the assembly of polyubiquitin chains on substrates ubiquitinated by another E3 ubiquitin ligase. Mediates 'Lys-48'-linked polyubiquitination of substrates. This is Ubiquitin conjugation factor E4 A from Bos taurus (Bovine).